A 218-amino-acid chain; its full sequence is Large ribosomal subunit protein uL3 (218 aa).

The interval 132-152 (FKGQGASHGTQAVHRRPGSIG) is disordered.

It belongs to the universal ribosomal protein uL3 family. As to quaternary structure, part of the 50S ribosomal subunit. Forms a cluster with proteins L14 and L19.

Its function is as follows. One of the primary rRNA binding proteins, it binds directly near the 3'-end of the 23S rRNA, where it nucleates assembly of the 50S subunit. This Rhodococcus erythropolis (strain PR4 / NBRC 100887) protein is Large ribosomal subunit protein uL3.